Consider the following 105-residue polypeptide: Putative ferredoxin-3 (105 aa).

4Fe-4S ferredoxin-type domains follow at residues 17 to 46 (YLTA…LHGI) and 70 to 100 (TIMV…HVAA). [4Fe-4S] cluster-binding residues include C26, C29, C32, C36, C80, C83, C86, and C90.

[4Fe-4S] cluster serves as cofactor.

Its function is as follows. Ferredoxins are iron-sulfur proteins that transfer electrons in a wide variety of metabolic reactions. The polypeptide is Putative ferredoxin-3 (fdxB) (Sinorhizobium fredii (strain NBRC 101917 / NGR234)).